We begin with the raw amino-acid sequence, 109 residues long: uncharacterized protein (109 aa).

An N-terminal signal peptide occupies residues 1–19 (MKKFALLAGLFVFAPMTWA).

This is an uncharacterized protein from Escherichia coli O6:H1 (strain CFT073 / ATCC 700928 / UPEC).